Consider the following 256-residue polypeptide: Type III pantothenate kinase (256 aa).

ATP is bound at residue 6 to 13 (DVGNTNIV). Residue 107 to 110 (GADR) coordinates substrate. The Proton acceptor role is filled by Asp109. Asp129 lines the K(+) pocket. Thr132 lines the ATP pocket. Substrate is bound at residue Thr184.

It belongs to the type III pantothenate kinase family. As to quaternary structure, homodimer. The cofactor is NH4(+). K(+) serves as cofactor.

Its subcellular location is the cytoplasm. The catalysed reaction is (R)-pantothenate + ATP = (R)-4'-phosphopantothenate + ADP + H(+). Its pathway is cofactor biosynthesis; coenzyme A biosynthesis; CoA from (R)-pantothenate: step 1/5. Catalyzes the phosphorylation of pantothenate (Pan), the first step in CoA biosynthesis. This chain is Type III pantothenate kinase, found in Pelotomaculum thermopropionicum (strain DSM 13744 / JCM 10971 / SI).